The chain runs to 241 residues: Probable transcriptional regulatory protein Maqu_2154 (241 aa).

The protein belongs to the TACO1 family.

It localises to the cytoplasm. This is Probable transcriptional regulatory protein Maqu_2154 from Marinobacter nauticus (strain ATCC 700491 / DSM 11845 / VT8) (Marinobacter aquaeolei).